A 509-amino-acid chain; its full sequence is Group 3 secretory phospholipase A2 (509 aa).

Residues 1–19 form the signal peptide; it reads MGVQAGLFGMLGFLGVALG. Residues 123–149 form a disordered region; it reads ESPAGARKKRAAGQSGVPGGGHQREKR. The tract at residues 150–291 is phospholipase A2-like; sequence GWTMPGTLWC…SWSSRATSPT (142 aa). Positions 158, 160, and 162 each coordinate Ca(2+). Cystine bridges form between C159-C181, C180-C220, C187-C213, and C211-C244. N167 is a glycosylation site (N-linked (GlcNAc...) asparagine). H184 is a catalytic residue. Residue D185 coordinates Ca(2+). Residue D214 is part of the active site. A glycan (N-linked (GlcNAc...) asparagine) is linked at N280. Positions 283–354 are disordered; it reads WSSRATSPTP…LQGPQGGLKP (72 aa). Over residues 284-296 the composition is skewed to low complexity; that stretch reads SSRATSPTPSSRS. A compositionally biased stretch (basic residues) spans 302-322; sequence PRQKQHLRKGPPHQKGSKRPS. 3 N-linked (GlcNAc...) asparagine glycosylation sites follow: N325, N396, and N439. A disordered region spans residues 458 to 482; that stretch reads QQRRHQLQDKGTDERQPWPSEPLRG. Basic and acidic residues predominate over residues 463-473; the sequence is QLQDKGTDERQ.

This sequence belongs to the phospholipase A2 family. It depends on Ca(2+) as a cofactor. N-glycosylation does not affect the catalytic activity, but is required for proper secretion. A nonglycosylated form is observed in several cell types. Post-translationally, in several cell types, the N- and C-termini are cleaved off. In terms of tissue distribution, expressed in kidney, heart, liver, and skeletal muscle. Also present in placenta and peripheral blood leukocytes. Not detected in colon, thymus, spleen and small intestine. In lung, expressed in bronchial epithelial cells and alveolar macrophages, but scarcely detected in alveolar epithelium, arterial walls and interstitial fibroblasts (at protein level). In joints of osteoarthritis and rheumatoid arthritis, expressed in endothelial cells (at protein level). In normal heart, detected in some vessels. In myocardial tissues with acute infarction, expressed in vascular endothelial cells adjacent to cardiomyocytes and those in lesions with granulation. Expression in cardiomyocytes is scarce (at protein level). In uterus, breast and colon cancers, detected in tumor cells and neighboring microvascular endothelium, but not in normal glandular tissues (at protein level). Expressed in dermal resting mast cells (at protein level) and pulmonary mast cells. Expressed in neuronal fibers (at protein level). Highly expressed in dorsal root ganglia neurons (at protein level). Expressed in Purkinje cells in cerebellum (at protein level). In stomach is preferentially expressed in neuronal fibers and in microvascular endothelium. Sparsely expressed in normal aorta (at protein level). Highly expressed in macrophages and smooth muscle cells in aorta with atheroma.

The protein resides in the secreted. It is found in the cell membrane. Its subcellular location is the cytoplasm. It localises to the cytoskeleton. The protein localises to the microtubule organizing center. The protein resides in the centrosome. It is found in the centriole. Its subcellular location is the recycling endosome. It carries out the reaction a 1,2-diacyl-sn-glycero-3-phosphocholine + H2O = a 1-acyl-sn-glycero-3-phosphocholine + a fatty acid + H(+). It catalyses the reaction 1-hexadecanoyl-2-(9Z,12Z-octadecadienoyl)-sn-glycero-3-phosphocholine + H2O = (9Z,12Z)-octadecadienoate + 1-hexadecanoyl-sn-glycero-3-phosphocholine + H(+). The enzyme catalyses 1-hexadecanoyl-2-(5Z,8Z,11Z,14Z-eicosatetraenoyl)-sn-glycero-3-phosphocholine + H2O = 1-hexadecanoyl-sn-glycero-3-phosphocholine + (5Z,8Z,11Z,14Z)-eicosatetraenoate + H(+). The catalysed reaction is 1-hexadecanoyl-2-(9Z,12Z-octadecadienoyl)-sn-glycero-3-phosphoethanolamine + H2O = 1-hexadecanoyl-sn-glycero-3-phosphoethanolamine + (9Z,12Z)-octadecadienoate + H(+). It carries out the reaction 1-hexadecanoyl-2-(5Z,8Z,11Z,14Z-eicosatetraenoyl)-sn-glycero-3-phosphoethanolamine + H2O = 1-hexadecanoyl-sn-glycero-3-phosphoethanolamine + (5Z,8Z,11Z,14Z)-eicosatetraenoate + H(+). Arachidonic acid release is markedly increased by glypican, a glycosylphosphatidylinositol-anchored heparan sulfate proteoglycan. Secretory calcium-dependent phospholipase A2 that primarily targets extracellular phospholipids. Hydrolyzes the ester bond of the fatty acyl group attached at sn-2 position of phospholipids without apparent head group selectivity. Contributes to phospholipid remodeling of low-density lipoprotein (LDL) and high-density lipoprotein (HDL) particles. Hydrolyzes LDL phospholipids releasing unsaturated fatty acids that regulate macrophage differentiation toward foam cells. May act in an autocrine and paracrine manner. Secreted by immature mast cells, acts on nearby fibroblasts upstream to PTDGS to synthesize prostaglandin D2 (PGD2), which in turn promotes mast cell maturation and degranulation via PTGDR. Secreted by epididymal epithelium, acts on immature sperm cells within the duct, modulating the degree of unsaturation of the fatty acyl components of phosphatidylcholines required for acrosome assembly and sperm cell motility. Facilitates the replacement of fatty acyl chains in phosphatidylcholines in sperm membranes from omega-6 and omega-9 to omega-3 polyunsaturated fatty acids (PUFAs). Coupled to lipoxygenase pathway, may process omega-6 PUFAs to generate oxygenated lipid mediators in the male reproductive tract. At pericentrosomal preciliary compartment, negatively regulates ciliogenesis likely by regulating endocytotic recycling of ciliary membrane protein. Coupled to cyclooxygenase pathway provides arachidonate to generate prostaglandin E2 (PGE2), a potent immunomodulatory lipid in inflammation and tumorigenesis. At colonic epithelial barrier, preferentially hydrolyzes phospholipids having arachidonate and docosahexaenoate at sn-2 position, contributing to the generation of oxygenated metabolites involved in colonic stem cell homeostasis. Releases C16:0 and C18:0 lysophosphatidylcholine subclasses from neuron plasma membranes and promotes neurite outgrowth and neuron survival. This Homo sapiens (Human) protein is Group 3 secretory phospholipase A2.